The chain runs to 366 residues: Polyprenyl transferase ausN (366 aa).

Transmembrane regions (helical) follow at residues Val97–Leu117, Leu121–Ile141, Leu164–Phe184, Leu215–Pro235, Ile239–Val259, Leu287–Gly307, Leu308–Leu328, and Ser346–Val366.

This sequence belongs to the UbiA prenyltransferase family. Requires Mg(2+) as cofactor.

Its subcellular location is the membrane. The catalysed reaction is 3,5-dimethylorsellinate + (2E,6E)-farnesyl diphosphate = (3R)-3-farnesyl-6-hydroxy-2,3,5-trimethyl-4-oxocyclohexa-1,5-diene-1-carboxylate + diphosphate + H(+). It participates in secondary metabolite biosynthesis; terpenoid biosynthesis. Its function is as follows. Polyprenyl transferase; part of the gene cluster that mediates the biosynthesis of calidodehydroaustin, a fungal meroterpenoid. The first step of the pathway is the synthesis of 3,5-dimethylorsellinic acid by the polyketide synthase ausA. 3,5-dimethylorsellinic acid is then prenylated by the polyprenyl transferase ausN. Further epoxidation by the FAD-dependent monooxygenase ausM and cyclization by the probable terpene cyclase ausL lead to the formation of protoaustinoid A. Protoaustinoid A is then oxidized to spiro-lactone preaustinoid A3 by the combined action of the FAD-binding monooxygenases ausB and ausC, and the dioxygenase ausE. Acid-catalyzed keto-rearrangement and ring contraction of the tetraketide portion of preaustinoid A3 by ausJ lead to the formation of preaustinoid A4. The aldo-keto reductase ausK, with the help of ausH, is involved in the next step by transforming preaustinoid A4 into isoaustinone which is in turn hydroxylated by the P450 monooxygenase ausI to form austinolide. The cytochrome P450 monooxygenase ausG modifies austinolide to austinol. Austinol is further acetylated to austin by the O-acetyltransferase ausP, which spontaneously changes to dehydroaustin. The cytochrome P450 monooxygenase ausR then converts dehydroaustin is into 7-dehydrodehydroaustin. The hydroxylation catalyzed by ausR permits the O-acetyltransferase ausQ to add an additional acetyl group to the molecule, leading to the formation of acetoxydehydroaustin. The short chain dehydrogenase ausT catalyzes the reduction of the double bond present between carbon atoms 1 and 2 to convert 7-dehydrodehydroaustin into 1,2-dihydro-7-hydroxydehydroaustin. AusQ catalyzes not only an acetylation reaction but also the addition of the PKS ausV diketide product to 1,2-dihydro-7-hydroxydehydroaustin, forming precalidodehydroaustin. Finally, the iron/alpha-ketoglutarate-dependent dioxygenase converts precalidodehydroaustin into calidodehydroaustin. The polypeptide is Polyprenyl transferase ausN (Aspergillus calidoustus).